The chain runs to 287 residues: Pyridoxal kinase PdxY (287 aa).

Residues Ser9 and 44–45 contribute to the substrate site; that span reads TQ. The ATP site is built by Asp111, Glu147, and Lys180. Asp221 is a substrate binding site.

It belongs to the pyridoxine kinase family. PdxY subfamily. As to quaternary structure, homodimer. Requires Mg(2+) as cofactor.

It carries out the reaction pyridoxal + ATP = pyridoxal 5'-phosphate + ADP + H(+). The protein operates within cofactor metabolism; pyridoxal 5'-phosphate salvage; pyridoxal 5'-phosphate from pyridoxal: step 1/1. Pyridoxal kinase involved in the salvage pathway of pyridoxal 5'-phosphate (PLP). Catalyzes the phosphorylation of pyridoxal to PLP. This chain is Pyridoxal kinase PdxY, found in Paraburkholderia phymatum (strain DSM 17167 / CIP 108236 / LMG 21445 / STM815) (Burkholderia phymatum).